Here is a 124-residue protein sequence, read N- to C-terminus: U12-barytoxin-Tl1a (124 aa).

The N-terminal stretch at 1-20 is a signal peptide; it reads MKTMIAWLVLLTFAAALCFA. Residues 21-78 constitute a propeptide that is removed on maturation; sequence DEGLKQEHMNERKKSRFREDIPDEISEDLLLQEMEAMEAELLEKEMRMEENRNSREKR. Intrachain disulfides connect Cys79–Cys99, Cys86–Cys104, and Cys98–Cys118.

Belongs to the neurotoxin 14 (magi-1) family. 04 (ICK-6) subfamily. Expressed by the venom gland.

Its subcellular location is the secreted. Functionally, ion channel inhibitor. The polypeptide is U12-barytoxin-Tl1a (Trittame loki (Brush-footed trapdoor spider)).